The primary structure comprises 259 residues: UPF0246 protein VSAL_I2547 (259 aa).

The protein belongs to the UPF0246 family.

The protein is UPF0246 protein VSAL_I2547 of Aliivibrio salmonicida (strain LFI1238) (Vibrio salmonicida (strain LFI1238)).